Consider the following 403-residue polypeptide: MEEDRGSALAAESALEKNVAELTVMDVYDIASLVGHEFERVIDQHGCEAIARLIPKVVRVLEILEVLVSRHHVAPELDELRLELDRLRLERMDRIEKERKHQKELELVEDVWRGEAQDLLSQIAQLQEENKQLMTNLSHKDVSFSEEEFQKHEGMSERERQVMKKLKEVVDKQRDEIRAKDRELGLKNEDVEALQQQQTRLMKINHDLRHRVTVVEAQGKALIEQKVELEADLQTKEQEMGSLRAELGKLRERLQGELNQNGEEEPVAELGGEECVSEAEKVAMDLKDPNRPRFTLQELRDVLHERNELKSKVFLLQEELAYYKSEEIEEENQIPQPPPIAHPRMSPQPESGIKRLFSFFSRDKKRLANTQRNVRIHETFGQWANCHRDDGYTEQGQEALQHL.

Residue Ser-7 is modified to Phosphoserine. One can recognise an RH1 domain in the interval 10–97 (AAESALEKNV…RLERMDRIEK (88 aa)). S-nitrosocysteine is present on Cys-47. The stretch at 76–265 (ELDELRLELD…GELNQNGEEE (190 aa)) forms a coiled coil. Residues 291–356 (RPRFTLQELR…PQPESGIKRL (66 aa)) enclose the RH2 domain. A disordered region spans residues 329 to 348 (EEENQIPQPPPIAHPRMSPQ).

It belongs to the RILPL family. In terms of assembly, interacts (when S-nitrosylated) with GAPDH. Interacts with RAB8A; interaction is dependent on the phosphorylation of 'Thr-72' of RAB8A. Interacts with RAB10 and RAB12; the interaction is dependent on the phosphorylation of 'Thr-73' of RAB10, and 'Ser-105' of RAB12. Post-translationally, S-nitrosylation is required for the interaction with GAPDH.

It is found in the cytoplasm. Its subcellular location is the cytosol. The protein localises to the cytoskeleton. It localises to the microtubule organizing center. The protein resides in the centrosome. It is found in the centriole. Its subcellular location is the cilium basal body. Its function is as follows. Plays a role in the regulation of cell shape and polarity. Plays a role in cellular protein transport, including protein transport away from primary cilia. Neuroprotective protein, which acts by sequestring GAPDH in the cytosol and prevent the apoptotic function of GAPDH in the nucleus. Competes with SIAH1 for binding GAPDH. Does not regulate lysosomal morphology and distribution. Binds to RAB10 following LRRK2-mediated RAB10 phosphorylation which leads to inhibition of ciliogenesis. This chain is RILP-like protein 1 (RILPL1), found in Bos taurus (Bovine).